We begin with the raw amino-acid sequence, 92 residues long: MASRATSLFIFFFLISCTFMLLETNASKNKSRSDLPLCGFREHCDGLWCPGEGGKYSCINWSCNFIEDCEKRIRCEKTGPCCFDGLCDCTNF.

The N-terminal stretch at 1–26 (MASRATSLFIFFFLISCTFMLLETNA) is a signal peptide. Disulfide bonds link cysteine 63/cysteine 82, cysteine 69/cysteine 87, and cysteine 75/cysteine 89.

Belongs to the DEFL family.

Its subcellular location is the secreted. This Arabidopsis thaliana (Mouse-ear cress) protein is Defensin-like protein 294.